Consider the following 1626-residue polypeptide: DNA topoisomerase 2-beta (1626 aa).

Position 2 is an N-acetylalanine (Ala-2). Lys-3 bears the N6-acetyllysine mark. Glycyl lysine isopeptide (Lys-Gly) (interchain with G-Cter in SUMO2) cross-links involve residues Gln-28, Asn-29, Lys-33, and Lys-34. ATP is bound by residues Asn-112, Asn-141, and Ser-169–Asn-171. Residues Lys-177 and Lys-178 each participate in a glycyl lysine isopeptide (Lys-Gly) (interchain with G-Cter in SUMO2) cross-link. Gly-182–Lys-189 is an ATP binding site. Residues Lys-228 and Lys-299 each participate in a glycyl lysine isopeptide (Lys-Gly) (interchain with G-Cter in SUMO2) cross-link. The segment at Lys-363–Lys-365 is interaction with DNA. Glycyl lysine isopeptide (Lys-Gly) (interchain with G-Cter in SUMO2) cross-links involve residues Lys-367 and Lys-373. Gln-397–Lys-399 provides a ligand contact to ATP. Residues Lys-437, Lys-439, and Lys-446 each participate in a glycyl lysine isopeptide (Lys-Gly) (interchain with G-Cter in SUMO2) cross-link. A Toprim domain is found at Cys-476–Glu-593. 3 residues coordinate Mg(2+): Glu-482, Asp-562, and Asp-564. Glycyl lysine isopeptide (Lys-Gly) (interchain with G-Cter in SUMO2) cross-links involve residues Lys-600, Lys-605, Lys-635, Lys-643, Lys-646, Lys-676, and Lys-712. The Topo IIA-type catalytic domain maps to Ile-736–Leu-1189. Tyr-826 (O-(5'-phospho-DNA)-tyrosine intermediate) is an active-site residue. The interaction with DNA stretch occupies residues Lys-1011–Ser-1020. The short motif at Glu-1034–Phe-1044 is the Nuclear export signal element. Lys-1092 is covalently cross-linked (Glycyl lysine isopeptide (Lys-Gly) (interchain with G-Cter in SUMO2)). A disordered region spans residues Ala-1110–Gly-1140. Residues Lys-1214, Lys-1217, Lys-1226, and Lys-1227 each participate in a glycyl lysine isopeptide (Lys-Gly) (interchain with G-Cter in SUMO2) cross-link. Ser-1236 is subject to Phosphoserine. Residues Lys-1250, Lys-1262, and Lys-1271 each participate in a glycyl lysine isopeptide (Lys-Gly) (interchain with G-Cter in SUMO2) cross-link. The segment at Phe-1274–Arg-1604 is disordered. At Thr-1292 the chain carries Phosphothreonine. Residues Lys-1323 and Lys-1327 each participate in a glycyl lysine isopeptide (Lys-Gly) (interchain with G-Cter in SUMO2) cross-link. 2 stretches are compositionally biased toward basic and acidic residues: residues Pro-1334–Ser-1344 and Ser-1358–Tyr-1370. 5 positions are modified to phosphoserine: Ser-1336, Ser-1340, Ser-1342, Ser-1344, and Ser-1358. Tyr-1370 is subject to Phosphotyrosine. The segment covering Phe-1374–Leu-1392 has biased composition (acidic residues). Ser-1375 carries the post-translational modification Phosphoserine. Lys-1398 is covalently cross-linked (Glycyl lysine isopeptide (Lys-Gly) (interchain with G-Cter in SUMO2)). Ser-1400 bears the Phosphoserine mark. Thr-1403 carries the post-translational modification Phosphothreonine. At Ser-1413 the chain carries Phosphoserine. Tyr-1421 is subject to Phosphotyrosine. The residue at position 1424 (Ser-1424) is a Phosphoserine. Basic and acidic residues predominate over residues Ala-1430 to Gln-1442. Lys-1440 participates in a covalent cross-link: Glycyl lysine isopeptide (Lys-Gly) (interchain with G-Cter in SUMO2). Ser-1441, Ser-1452, and Ser-1454 each carry phosphoserine. Lys-1456 is covalently cross-linked (Glycyl lysine isopeptide (Lys-Gly) (interchain with G-Cter in SUMO2)). Residues Lys-1456–Ser-1466 show a composition bias toward basic and acidic residues. Residues Ser-1461, Ser-1466, Ser-1473, and Ser-1476 each carry the phosphoserine modification. Lys-1490 participates in a covalent cross-link: Glycyl lysine isopeptide (Lys-Gly) (interchain with G-Cter in SUMO2). The interaction with PLSCR1 stretch occupies residues Lys-1506–Lys-1512. 3 positions are modified to phosphoserine: Ser-1522, Ser-1524, and Ser-1526. Residues Gly-1539–Ala-1549 show a composition bias toward basic residues. Phosphoserine is present on residues Ser-1550 and Ser-1552. A compositionally biased stretch (basic residues) spans Lys-1563 to Lys-1574. Phosphothreonine is present on Thr-1575. 2 positions are modified to phosphoserine: Ser-1576 and Ser-1581. A Phosphothreonine modification is found at Thr-1592. At Ser-1596 the chain carries Phosphoserine. Tyr-1609 is modified (phosphotyrosine). Position 1613 is a phosphoserine (Ser-1613).

Belongs to the type II topoisomerase family. As to quaternary structure, homodimer. Interacts with KIAA1210. Interacts with PLSCR1. Mg(2+) serves as cofactor. Requires Mn(2+) as cofactor. The cofactor is Ca(2+). (Microbial infection) Deubiquitinated by Epstein-Barr virus BPLF1; leading to stabilized SUMOylated TOP2A trapped in cleavage complexes, which halts the DNA damage response to TOP2A-induced double-strand DNA breaks. In terms of processing, SUMOylated. Expressed in the tonsil, spleen, lymph node, thymus, skin, pancreas, testis, colon, kidney, liver, brain and lung. Also found in breast, colon and lung carcinomas, Hodgkin's disease, large-cell non-Hodgkin's lymphoma, lymphocytic lymphomas and seminomas.

It localises to the nucleus. The protein localises to the nucleolus. Its subcellular location is the nucleoplasm. It catalyses the reaction ATP-dependent breakage, passage and rejoining of double-stranded DNA.. Functionally, key decatenating enzyme that alters DNA topology by binding to two double-stranded DNA molecules, generating a double-stranded break in one of the strands, passing the intact strand through the broken strand, and religating the broken strand. Plays a role in B-cell differentiation. In Homo sapiens (Human), this protein is DNA topoisomerase 2-beta (TOP2B).